The primary structure comprises 352 residues: Photosystem II D2 protein (352 aa).

The Cytoplasmic segment spans residues 1–31 (MTIAIGRAPAERGWFDILDDWLKRDRFVFVG). The chain crosses the membrane as a helical span at residues 32-53 (WSGILLFPCAYLALGGWLTGTT). At 54–108 (FVTSWYTHGLASSYLEGCNFLTVAVSTPANSMGHSLLLLWGPEAQGDFTRWCQLG) the chain is on the lumenal side. Residues 109–131 (GLWTFIALHGAFGLIGFMLRQFE) traverse the membrane as a helical segment. His-117 provides a ligand contact to chlorophyll a. Gln-129 provides a ligand contact to pheophytin a. The Cytoplasmic portion of the chain corresponds to 132 to 140 (IARLVGVRP). A helical membrane pass occupies residues 141 to 160 (YNAIAFSAPIAVFVSVFLIY). Residue Asn-142 coordinates pheophytin a. The Lumenal segment spans residues 161 to 193 (PLGQSSWFFAPSFGVAAIFRFLLFFQGFHNWTL). Residues 194 to 217 (NPFHMMGVAGVLGGALLCAIHGAT) form a helical membrane-spanning segment. His-197 serves as a coordination point for chlorophyll a. Residues His-214 and Phe-261 each contribute to the a plastoquinone site. His-214 provides a ligand contact to Fe cation. The Cytoplasmic segment spans residues 218 to 265 (VENTLFQDGEGASTFRAFNPTQAEETYSMVTANRFWSQIFGIAFSNKR). Residues 266–288 (WLHFFMLFVPVTGLWMSAIGVVG) form a helical membrane-spanning segment. His-268 provides a ligand contact to Fe cation. Over 289-352 (LALNLRSYDF…EEVLPRGNAL (64 aa)) the chain is Lumenal.

The protein belongs to the reaction center PufL/M/PsbA/D family. In terms of assembly, PSII is composed of 1 copy each of membrane proteins PsbA, PsbB, PsbC, PsbD, PsbE, PsbF, PsbH, PsbI, PsbJ, PsbK, PsbL, PsbM, PsbT, PsbX, PsbY, PsbZ, Psb30/Ycf12, peripheral proteins PsbO, CyanoQ (PsbQ), PsbU, PsbV and a large number of cofactors. It forms dimeric complexes. Part of a photosystem II (PSII) assembly intermediate complex PSII-I; crystallized from a strain deleted of psbJ, it forms monomeric PSII before addition of the oxygen evolving complex. PSII-I includes 3 assembly factors not found in mature PSII (Psb27, Psb28 and Psb34). It depends on The D1/D2 heterodimer binds P680, chlorophylls that are the primary electron donor of PSII, and subsequent electron acceptors. It shares a non-heme iron and each subunit binds pheophytin, quinone, additional chlorophylls, carotenoids and lipids. There is also a Cl(-1) ion associated with D1 and D2, which is required for oxygen evolution. PSII binds additional chlorophylls, carotenoids and specific lipids. as a cofactor.

It localises to the cellular thylakoid membrane. The catalysed reaction is 2 a plastoquinone + 4 hnu + 2 H2O = 2 a plastoquinol + O2. Functionally, photosystem II (PSII) is a light-driven water:plastoquinone oxidoreductase that uses light energy to abstract electrons from H(2)O, generating O(2) and a proton gradient subsequently used for ATP formation. It consists of a core antenna complex that captures photons, and an electron transfer chain that converts photonic excitation into a charge separation. The D1/D2 (PsbA/PsbD) reaction center heterodimer binds P680, the primary electron donor of PSII as well as several subsequent electron acceptors. D2 is needed for assembly of a stable PSII complex. This Thermosynechococcus vestitus (strain NIES-2133 / IAM M-273 / BP-1) protein is Photosystem II D2 protein.